The sequence spans 561 residues: Probable galacturonosyltransferase 9 (561 aa).

The Cytoplasmic portion of the chain corresponds to 1 to 27; sequence MAVAFRGGRGGVGSGQSTGLRSFFSYR. A helical; Signal-anchor for type II membrane protein membrane pass occupies residues 28–48; it reads IFISALFSFLFLATFSVVLNS. Residues 49 to 561 lie on the Lumenal side of the membrane; it reads SRHQPHQDHT…EFVQMCNFGL (513 aa). N-linked (GlcNAc...) asparagine glycosylation is found at asparagine 124, asparagine 320, asparagine 346, and asparagine 426.

Belongs to the glycosyltransferase 8 family. As to expression, expressed in roots, inflorescences, siliques, leaves and stems.

It is found in the golgi apparatus membrane. The protein operates within glycan metabolism; pectin biosynthesis. In terms of biological role, may be involved in pectin synthesis. This is Probable galacturonosyltransferase 9 (GAUT9) from Arabidopsis thaliana (Mouse-ear cress).